The sequence spans 360 residues: Probable butyrate kinase (360 aa).

Belongs to the acetokinase family.

The protein resides in the cytoplasm. It catalyses the reaction butanoate + ATP = butanoyl phosphate + ADP. In Enterococcus faecalis (strain ATCC 700802 / V583), this protein is Probable butyrate kinase.